The primary structure comprises 402 residues: Homoserine O-acetyltransferase (402 aa).

Residues 38-359 (NAVLVCHALT…HGHDAFLVEP (322 aa)) enclose the AB hydrolase-1 domain. Ser146 acts as the Nucleophile in catalysis. Arg217 provides a ligand contact to substrate. Active-site residues include Asp319 and His352. Substrate is bound at residue Asp353.

It belongs to the AB hydrolase superfamily. MetX family. In terms of assembly, homodimer.

The protein resides in the cytoplasm. The catalysed reaction is L-homoserine + acetyl-CoA = O-acetyl-L-homoserine + CoA. It functions in the pathway amino-acid biosynthesis; L-methionine biosynthesis via de novo pathway; O-acetyl-L-homoserine from L-homoserine: step 1/1. Its function is as follows. Transfers an acetyl group from acetyl-CoA to L-homoserine, forming acetyl-L-homoserine. This chain is Homoserine O-acetyltransferase, found in Haloarcula marismortui (strain ATCC 43049 / DSM 3752 / JCM 8966 / VKM B-1809) (Halobacterium marismortui).